A 45-amino-acid polypeptide reads, in one-letter code: Conotoxin reg3.12 (45 aa).

The propeptide occupies Asp1 to Lys31. Disulfide bonds link Cys32/Cys44, Cys33/Cys42, and Cys38/Cys45.

The protein belongs to the conotoxin M superfamily. Expressed by the venom duct.

The protein resides in the secreted. This is Conotoxin reg3.12 from Conus regius (Crown cone).